The primary structure comprises 456 residues: Bifunctional protein GlmU (456 aa).

A pyrophosphorylase region spans residues 1–229 (MLNNAMSVVI…LSEVEGVNNR (229 aa)). Residues 11–14 (LAAG), Lys-25, Gln-76, 81–82 (GT), 103–105 (YGD), Gly-140, Glu-154, Asn-169, and Asn-227 each bind UDP-N-acetyl-alpha-D-glucosamine. Asp-105 is a binding site for Mg(2+). Asn-227 serves as a coordination point for Mg(2+). A linker region spans residues 230–250 (LQLSRLERVYQSEQAEKLLLA). Positions 251–456 (GVMLRDPARF…EGWRRPVKKK (206 aa)) are N-acetyltransferase. The UDP-N-acetyl-alpha-D-glucosamine site is built by Arg-333 and Lys-351. Catalysis depends on His-363, which acts as the Proton acceptor. Residues Tyr-366 and Asn-377 each contribute to the UDP-N-acetyl-alpha-D-glucosamine site. Acetyl-CoA is bound by residues Ala-380, 386-387 (NY), Ser-405, Ala-423, and Arg-440.

In the N-terminal section; belongs to the N-acetylglucosamine-1-phosphate uridyltransferase family. This sequence in the C-terminal section; belongs to the transferase hexapeptide repeat family. Homotrimer. Requires Mg(2+) as cofactor.

It is found in the cytoplasm. It catalyses the reaction alpha-D-glucosamine 1-phosphate + acetyl-CoA = N-acetyl-alpha-D-glucosamine 1-phosphate + CoA + H(+). The catalysed reaction is N-acetyl-alpha-D-glucosamine 1-phosphate + UTP + H(+) = UDP-N-acetyl-alpha-D-glucosamine + diphosphate. Its pathway is nucleotide-sugar biosynthesis; UDP-N-acetyl-alpha-D-glucosamine biosynthesis; N-acetyl-alpha-D-glucosamine 1-phosphate from alpha-D-glucosamine 6-phosphate (route II): step 2/2. It participates in nucleotide-sugar biosynthesis; UDP-N-acetyl-alpha-D-glucosamine biosynthesis; UDP-N-acetyl-alpha-D-glucosamine from N-acetyl-alpha-D-glucosamine 1-phosphate: step 1/1. It functions in the pathway bacterial outer membrane biogenesis; LPS lipid A biosynthesis. Its function is as follows. Catalyzes the last two sequential reactions in the de novo biosynthetic pathway for UDP-N-acetylglucosamine (UDP-GlcNAc). The C-terminal domain catalyzes the transfer of acetyl group from acetyl coenzyme A to glucosamine-1-phosphate (GlcN-1-P) to produce N-acetylglucosamine-1-phosphate (GlcNAc-1-P), which is converted into UDP-GlcNAc by the transfer of uridine 5-monophosphate (from uridine 5-triphosphate), a reaction catalyzed by the N-terminal domain. This is Bifunctional protein GlmU from Escherichia coli O157:H7 (strain EC4115 / EHEC).